Consider the following 335-residue polypeptide: 4-hydroxy-3-methylbut-2-enyl diphosphate reductase (335 aa).

C21 contacts [4Fe-4S] cluster. H50 and H86 together coordinate (2E)-4-hydroxy-3-methylbut-2-enyl diphosphate. 2 residues coordinate dimethylallyl diphosphate: H50 and H86. The isopentenyl diphosphate site is built by H50 and H86. Position 108 (C108) interacts with [4Fe-4S] cluster. Position 136 (H136) interacts with (2E)-4-hydroxy-3-methylbut-2-enyl diphosphate. H136 is a dimethylallyl diphosphate binding site. H136 is an isopentenyl diphosphate binding site. E138 acts as the Proton donor in catalysis. T177 contacts (2E)-4-hydroxy-3-methylbut-2-enyl diphosphate. C207 is a binding site for [4Fe-4S] cluster. (2E)-4-hydroxy-3-methylbut-2-enyl diphosphate-binding residues include S235, S236, N237, and S280. Dimethylallyl diphosphate-binding residues include S235, S236, N237, and S280. S235, S236, N237, and S280 together coordinate isopentenyl diphosphate.

It belongs to the IspH family. It depends on [4Fe-4S] cluster as a cofactor.

It catalyses the reaction isopentenyl diphosphate + 2 oxidized [2Fe-2S]-[ferredoxin] + H2O = (2E)-4-hydroxy-3-methylbut-2-enyl diphosphate + 2 reduced [2Fe-2S]-[ferredoxin] + 2 H(+). The enzyme catalyses dimethylallyl diphosphate + 2 oxidized [2Fe-2S]-[ferredoxin] + H2O = (2E)-4-hydroxy-3-methylbut-2-enyl diphosphate + 2 reduced [2Fe-2S]-[ferredoxin] + 2 H(+). The protein operates within isoprenoid biosynthesis; dimethylallyl diphosphate biosynthesis; dimethylallyl diphosphate from (2E)-4-hydroxy-3-methylbutenyl diphosphate: step 1/1. It participates in isoprenoid biosynthesis; isopentenyl diphosphate biosynthesis via DXP pathway; isopentenyl diphosphate from 1-deoxy-D-xylulose 5-phosphate: step 6/6. In terms of biological role, catalyzes the conversion of 1-hydroxy-2-methyl-2-(E)-butenyl 4-diphosphate (HMBPP) into a mixture of isopentenyl diphosphate (IPP) and dimethylallyl diphosphate (DMAPP). Acts in the terminal step of the DOXP/MEP pathway for isoprenoid precursor biosynthesis. The chain is 4-hydroxy-3-methylbut-2-enyl diphosphate reductase from Rhizobium rhizogenes (strain K84 / ATCC BAA-868) (Agrobacterium radiobacter).